The following is a 289-amino-acid chain: Stress response regulator protein 1 (289 aa).

The interval 77-136 is disordered; sequence LDCTNSEMDEEDDFEDDEDDENLGLINPLHHKSSHGQISDYSPLTPFTEPPSASLSKPSF. A compositionally biased stretch (acidic residues) spans 83–98; sequence EMDEEDDFEDDEDDEN. Polar residues predominate over residues 127-136; the sequence is PSASLSKPSF. Positions 163-281 constitute a Response regulatory domain; the sequence is NFLIVDDNII…YDFVMDRIDE (119 aa). Aspartate 214 is subject to 4-aspartylphosphate.

Functionally, required for stress adaptation, morphogenesis and virulence. This is Stress response regulator protein 1 (SRR1) from Scheffersomyces stipitis (strain ATCC 58785 / CBS 6054 / NBRC 10063 / NRRL Y-11545) (Yeast).